We begin with the raw amino-acid sequence, 521 residues long: Cytochrome P450 1A1 (521 aa).

Position 229 (phenylalanine 229) interacts with substrate. Cysteine 463 contributes to the heme binding site.

The protein belongs to the cytochrome P450 family. Requires heme as cofactor.

The protein resides in the endoplasmic reticulum membrane. Its subcellular location is the microsome membrane. It carries out the reaction an organic molecule + reduced [NADPH--hemoprotein reductase] + O2 = an alcohol + oxidized [NADPH--hemoprotein reductase] + H2O + H(+). Cytochromes P450 are a group of heme-thiolate monooxygenases. They oxidize a variety of structurally unrelated compounds, including steroids, fatty acids, and xenobiotics. The protein is Cytochrome P450 1A1 (cyp1a1) of Platichthys flesus (European flounder).